We begin with the raw amino-acid sequence, 307 residues long: S-methyl-5'-thioadenosine phosphorylase (307 aa).

Phosphate is bound by residues Thr20, 62–63 (RH), and 95–96 (SA). A substrate-binding site is contributed by Met197. Ser198 is a binding site for phosphate. 221-223 (DYD) lines the substrate pocket.

This sequence belongs to the PNP/MTAP phosphorylase family. MTAP subfamily. As to quaternary structure, homotrimer.

The protein resides in the cytoplasm. The protein localises to the nucleus. The enzyme catalyses S-methyl-5'-thioadenosine + phosphate = 5-(methylsulfanyl)-alpha-D-ribose 1-phosphate + adenine. It participates in amino-acid biosynthesis; L-methionine biosynthesis via salvage pathway; S-methyl-5-thio-alpha-D-ribose 1-phosphate from S-methyl-5'-thioadenosine (phosphorylase route): step 1/1. Functionally, catalyzes the reversible phosphorylation of S-methyl-5'-thioadenosine (MTA) to adenine and 5-methylthioribose-1-phosphate. Involved in the breakdown of MTA, a major by-product of polyamine biosynthesis. Responsible for the first step in the methionine salvage pathway after MTA has been generated from S-adenosylmethionine. Has broad substrate specificity with 6-aminopurine nucleosides as preferred substrates. This is S-methyl-5'-thioadenosine phosphorylase from Fusarium vanettenii (strain ATCC MYA-4622 / CBS 123669 / FGSC 9596 / NRRL 45880 / 77-13-4) (Fusarium solani subsp. pisi).